We begin with the raw amino-acid sequence, 478 residues long: Cytochrome P450 family 716 subfamily AD polypeptide 4 (478 aa).

A helical transmembrane segment spans residues M1–F21. Position 425 (C425) interacts with heme.

It belongs to the cytochrome P450 family. Requires heme as cofactor. As to expression, mainly expressed in petioles and, to a lower extent, in roots.

The protein localises to the membrane. It carries out the reaction (1S,3bR,4R,5aR,9aR,9bR,11aS)-1-[(4R)-5-[(2S)-3,3-dimethyloxiran-2-yl]-1,4-dihydroxybutan-2-yl]-3b,6,6,9a,11a-pentamethyl-7-oxo-1H,2H,3bH,4H,5H,5aH,6H,7H,9aH,9bH,10H,11H,11aH-cyclopenta[a]phenanthren-4-yl acetate + reduced [NADPH--hemoprotein reductase] + O2 = (1S,3bR,4R,5aR,9aR,9bR,11aS)-1-(1-hydroxy-4-oxobutan-2-yl)-3b,6,6,9a,11a-pentamethyl-7-oxo-1H,2H,3bH,4H,5H,5aH,6H,7H,9aH,9bH,10H,11H,11aH-cyclopenta[a]phenanthren-4-yl acetate + 2-methylpropanoate + oxidized [NADPH--hemoprotein reductase] + H2O + 2 H(+). It functions in the pathway secondary metabolite biosynthesis; terpenoid biosynthesis. Its function is as follows. Monooxygenase involved in the biosynthesis of limonoids triterpene natural products such as azadirachtin, an antifeedant widely used as bioinsecticide, and possessing many medicinal applications including anti-tumoral, anti-malarial, anti-rheumatic, antibacterial, anti-inflammatory, anti-pyretic and diuretic effects. Catalyzes the formation of (1S,3bR,4R,5aR,9aR,9bR,11aS)-1-(1-hydroxy-4-oxobutan-2-yl)-3b,6,6,9a,11a-pentamethyl-7-oxo-1H,2H,3bH,4H,5H,5aH,6H,7H,9aH,9bH,10H,11H,11aH-cyclopenta[a]phenanthren-4-yl acetate. In Melia azedarach (Chinaberry tree), this protein is Cytochrome P450 family 716 subfamily AD polypeptide 4.